Consider the following 111-residue polypeptide: Cornifelin (111 aa).

Belongs to the cornifelin family. As to quaternary structure, directly or indirectly cross-linked to CE proteins loricin and involucrin (IVL).

The protein resides in the cytoplasm. Its function is as follows. Part of the insoluble cornified cell envelope (CE) of stratified squamous epithelia. This Mus musculus (Mouse) protein is Cornifelin (Cnfn).